Here is a 1342-residue protein sequence, read N- to C-terminus: DNA-directed RNA polymerase subunit beta (1342 aa).

The protein belongs to the RNA polymerase beta chain family. As to quaternary structure, the RNAP catalytic core consists of 2 alpha, 1 beta, 1 beta' and 1 omega subunit. When a sigma factor is associated with the core the holoenzyme is formed, which can initiate transcription.

It catalyses the reaction RNA(n) + a ribonucleoside 5'-triphosphate = RNA(n+1) + diphosphate. In terms of biological role, DNA-dependent RNA polymerase catalyzes the transcription of DNA into RNA using the four ribonucleoside triphosphates as substrates. The chain is DNA-directed RNA polymerase subunit beta from Mannheimia succiniciproducens (strain KCTC 0769BP / MBEL55E).